The sequence spans 117 residues: Multidrug resistance protein EbrB (117 aa).

Helical transmembrane passes span 3 to 23, 31 to 51, 59 to 79, and 81 to 101; these read GLLYLALAIVSEVFGSTMLKL, WPIGGVIAGFLSAFTFLSFSL, AYATWSGVGTALTAIVGFLLF, and ETISLKGVFGLTLVIAGVVVL.

The protein belongs to the drug/metabolite transporter (DMT) superfamily. Small multidrug resistance (SMR) (TC 2.A.7.1) family. EbrA/EbrB subfamily. As to quaternary structure, the efflux pump is composed of EbrA and EbrB.

Its subcellular location is the cell membrane. Functionally, part of a multidrug efflux pump. Confers resistance to cationic lipophilic dyes such as ethidium bromide, acriflavine, pyronine Y and safranin O. The efflux is probably coupled to an influx of protons. The polypeptide is Multidrug resistance protein EbrB (ebrB) (Bacillus atrophaeus).